Reading from the N-terminus, the 367-residue chain is Bi-functional coumaroyl CoA and feruloyl CoA ortho-hydroxylase Diox4 (367 aa).

Residues 207–317 (IREPMLVGSR…RISVPLFVNP (111 aa)) form the Fe2OG dioxygenase domain. A 2-oxoglutarate-binding site is contributed by Y223. Fe cation is bound by residues H238, D240, and H298. The 2-oxoglutarate site is built by R308 and S310.

It belongs to the iron/ascorbate-dependent oxidoreductase family. It depends on L-ascorbate as a cofactor. Fe(2+) serves as cofactor.

The enzyme catalyses (E)-4-coumaroyl-CoA + 2-oxoglutarate + O2 = (E)-2,4-dihydroxycinnamoyl-CoA + succinate + CO2. It catalyses the reaction (E)-feruloyl-CoA + 2-oxoglutarate + O2 = (E)-6-hydroxyferuloyl-CoA + succinate + CO2. Its pathway is phenylpropanoid metabolism. Repressed by the competitive inhibitor psoralen, but not by umbelliferone, xanthotoxin, bergapten and isopimpinellin. Functionally, 2-oxoglutarate (OG)- and Fe(II)-dependent dioxygenase (2OGD) involved in scopoletin and umbelliferone biosynthesis. Converts feruloyl CoA into 6'-hydroxyferuloyl CoA, and p-coumaroyl CoA into 2,4-dihydroxycinnamoyl-CoA. Has no activity with cinnamic acid, caffeic acid, p-coumaric acid, ferulic acid, cinnamoyl-CoA and caffeoyl-CoA. The protein is Bi-functional coumaroyl CoA and feruloyl CoA ortho-hydroxylase Diox4 of Ruta graveolens (Common rue).